The chain runs to 52 residues: Large ribosomal subunit protein bL33 (52 aa).

It belongs to the bacterial ribosomal protein bL33 family.

The chain is Large ribosomal subunit protein bL33 from Campylobacter jejuni subsp. jejuni serotype O:6 (strain 81116 / NCTC 11828).